Consider the following 1824-residue polypeptide: Treslin (1824 aa).

10 disordered regions span residues 542-572 (EFYQ…QKMK), 590-622 (AQKT…KPGL), 907-973 (SPSK…SGES), 1001-1035 (RHSS…KGKF), 1098-1117 (AVGC…VGDN), 1189-1221 (VPEN…SPEE), 1293-1388 (PFCN…DDDK), 1459-1518 (FEGK…QSSP), 1617-1650 (TPTH…NLNS), and 1803-1824 (PLCQ…KLLD). Over residues 546-555 (SSTAGSSGSL) the composition is skewed to low complexity. Polar residues predominate over residues 562 to 572 (TQCTPVRQKMK). Basic and acidic residues predominate over residues 605–619 (GTEKGGKKSSGDRTK). A compositionally biased stretch (polar residues) spans 907-921 (SPSKKSKMPRSQSVS). Positions 932–952 (SDVDNDDRHTLLTKKVSETPL) are enriched in basic and acidic residues. Composition is skewed to polar residues over residues 1005-1014 (VFYSSSQPRS) and 1103-1114 (TPQSPRTPNRTV). A compositionally biased stretch (polar residues) spans 1319–1345 (RSGNTPVKESCSPSSNSQGITGTSPSP). Residues 1347–1370 (KSLSSAVAKSSPSPSFGPSRSGVG) show a composition bias toward low complexity. Residues 1462-1472 (KQTTSTGTPLT) are compositionally biased toward polar residues. The segment covering 1480-1490 (TPDRRQREAEA) has biased composition (basic and acidic residues). Composition is skewed to polar residues over residues 1617–1629 (TPTH…QSPL) and 1636–1650 (SPQS…NLNS). Over residues 1807–1824 (PRRRRTPSRTYSRKKLLD) the composition is skewed to basic residues.

The protein belongs to the treslin family. Interacts with topbp1 (via BRCT domains); interaction takes place in a cdk2-dependent manner. Component of the replisome complex.

The protein resides in the nucleus. Its function is as follows. Regulator of DNA replication and S/M and G2/M checkpoints. Regulates the triggering of DNA replication initiation via its interaction with topbp1 by participating in cdk2-mediated loading of cdc45l onto replication origins. Required for the transition from pre-replication complex (pre-RC) to pre-initiation complex (pre-IC). Required to prevent mitotic entry after treatment with ionizing radiation. This Danio rerio (Zebrafish) protein is Treslin (ticrr).